The sequence spans 369 residues: Peptide chain release factor 2 (369 aa).

The residue at position 251 (Q251) is an N5-methylglutamine.

This sequence belongs to the prokaryotic/mitochondrial release factor family. Methylated by PrmC. Methylation increases the termination efficiency of RF2.

The protein resides in the cytoplasm. Its function is as follows. Peptide chain release factor 2 directs the termination of translation in response to the peptide chain termination codons UGA and UAA. The sequence is that of Peptide chain release factor 2 (prfB) from Chlamydia pneumoniae (Chlamydophila pneumoniae).